Consider the following 286-residue polypeptide: ATP synthase gamma chain (286 aa).

Belongs to the ATPase gamma chain family. As to quaternary structure, F-type ATPases have 2 components, CF(1) - the catalytic core - and CF(0) - the membrane proton channel. CF(1) has five subunits: alpha(3), beta(3), gamma(1), delta(1), epsilon(1). CF(0) has three main subunits: a, b and c.

Its subcellular location is the cell inner membrane. Produces ATP from ADP in the presence of a proton gradient across the membrane. The gamma chain is believed to be important in regulating ATPase activity and the flow of protons through the CF(0) complex. The chain is ATP synthase gamma chain from Shewanella piezotolerans (strain WP3 / JCM 13877).